A 224-amino-acid polypeptide reads, in one-letter code: Ribonuclease T (224 aa).

The region spanning 20–194 (VVIDVETAGF…YDTERTAELF (175 aa)) is the Exonuclease domain. Mg(2+)-binding residues include aspartate 23, glutamate 25, histidine 181, and aspartate 186. The active-site Proton donor/acceptor is histidine 181.

It belongs to the RNase T family. As to quaternary structure, homodimer. Mg(2+) serves as cofactor.

Its function is as follows. Trims short 3' overhangs of a variety of RNA species, leaving a one or two nucleotide 3' overhang. Responsible for the end-turnover of tRNA: specifically removes the terminal AMP residue from uncharged tRNA (tRNA-C-C-A). Also appears to be involved in tRNA biosynthesis. This is Ribonuclease T from Enterobacter sp. (strain 638).